Reading from the N-terminus, the 328-residue chain is 4-hydroxy-3-methylbut-2-enyl diphosphate reductase (328 aa).

Cysteine 24 is a binding site for [4Fe-4S] cluster. Histidine 55 and histidine 88 together coordinate (2E)-4-hydroxy-3-methylbut-2-enyl diphosphate. Dimethylallyl diphosphate-binding residues include histidine 55 and histidine 88. Positions 55 and 88 each coordinate isopentenyl diphosphate. [4Fe-4S] cluster is bound at residue cysteine 110. Histidine 138 serves as a coordination point for (2E)-4-hydroxy-3-methylbut-2-enyl diphosphate. Residue histidine 138 participates in dimethylallyl diphosphate binding. Histidine 138 is an isopentenyl diphosphate binding site. Glutamate 140 functions as the Proton donor in the catalytic mechanism. Residue threonine 178 coordinates (2E)-4-hydroxy-3-methylbut-2-enyl diphosphate. [4Fe-4S] cluster is bound at residue cysteine 208. The (2E)-4-hydroxy-3-methylbut-2-enyl diphosphate site is built by serine 236, serine 237, asparagine 238, and serine 279. The dimethylallyl diphosphate site is built by serine 236, serine 237, asparagine 238, and serine 279. Isopentenyl diphosphate contacts are provided by serine 236, serine 237, asparagine 238, and serine 279.

The protein belongs to the IspH family. It depends on [4Fe-4S] cluster as a cofactor.

It carries out the reaction isopentenyl diphosphate + 2 oxidized [2Fe-2S]-[ferredoxin] + H2O = (2E)-4-hydroxy-3-methylbut-2-enyl diphosphate + 2 reduced [2Fe-2S]-[ferredoxin] + 2 H(+). The catalysed reaction is dimethylallyl diphosphate + 2 oxidized [2Fe-2S]-[ferredoxin] + H2O = (2E)-4-hydroxy-3-methylbut-2-enyl diphosphate + 2 reduced [2Fe-2S]-[ferredoxin] + 2 H(+). Its pathway is isoprenoid biosynthesis; dimethylallyl diphosphate biosynthesis; dimethylallyl diphosphate from (2E)-4-hydroxy-3-methylbutenyl diphosphate: step 1/1. It participates in isoprenoid biosynthesis; isopentenyl diphosphate biosynthesis via DXP pathway; isopentenyl diphosphate from 1-deoxy-D-xylulose 5-phosphate: step 6/6. In terms of biological role, catalyzes the conversion of 1-hydroxy-2-methyl-2-(E)-butenyl 4-diphosphate (HMBPP) into a mixture of isopentenyl diphosphate (IPP) and dimethylallyl diphosphate (DMAPP). Acts in the terminal step of the DOXP/MEP pathway for isoprenoid precursor biosynthesis. The protein is 4-hydroxy-3-methylbut-2-enyl diphosphate reductase of Ehrlichia ruminantium (strain Gardel).